A 469-amino-acid chain; its full sequence is Protein C-ets-2 (469 aa).

Positions 85–170 (ATFSGFKKEQ…EHLEQMIKEN (86 aa)) constitute a PNT domain. 2 positions are modified to phosphoserine: S220 and S225. Positions 264–289 (NLLTNNSGTPKDHDSPENGADSFESS) are disordered. Phosphoserine is present on residues S295, S298, and S301. A DNA-binding region (ETS) is located at residues 363–443 (IQLWQFLLEL…SGKRYVYRFV (81 aa)).

Belongs to the ETS family. In terms of processing, phosphorylation by CDK10 at Ser-220 and Ser-225 creates a phosphodegron that targets ETS2 for proteasomal degradation.

It localises to the nucleus. Functionally, transcription factor activating transcription. Binds specifically the DNA GGAA/T core motif (Ets-binding site or EBS) in gene promoters and stimulates transcription. This is Protein C-ets-2 (ETS2) from Homo sapiens (Human).